Reading from the N-terminus, the 141-residue chain is Acetyltransferase YE1169 (141 aa).

Residues 1–141 (MEIRVFQQSD…GKRLIVDQEY (141 aa)) form the N-acetyltransferase domain.

It belongs to the acetyltransferase family. YpeA subfamily.

This is Acetyltransferase YE1169 from Yersinia enterocolitica serotype O:8 / biotype 1B (strain NCTC 13174 / 8081).